We begin with the raw amino-acid sequence, 646 residues long: RNA-binding protein RMD9, mitochondrial (646 aa).

The N-terminal 14 residues, 1 to 14 (MMLRRNAVRSLKTM), are a transit peptide targeting the mitochondrion. Residues 15 to 51 (EISVSNVVNSGSIAMLRGKLANVVLSDRTYHSSPIFH) constitute a propeptide, removed in mature form. Residues 209-238 (VSGYGATHLLTSFKELSFDDDCIRIWEASK) form a PPR1 repeat. The PPR2 repeat unit spans residues 251 to 282 (EPKVVGFMLPLLYAKTRSLTEPNELYNQIIQS). The PPR3 repeat unit spans residues 288-317 (PNLYSGLIKVFIKAEDYEKALSLFGQLCEK). The PPR4 repeat unit spans residues 323–353 (YGYLIETHLSFIGDSKNLTLAESFFDKIIND). The stretch at 363–394 (VSTVNSFLQNIWKAQNDFDHVYRIWEKAVKFY) is one PPR5 repeat. The PPR6 repeat unit spans residues 401–439 (GILSSLNNTFFTIFFENYINDNINGFRKLQEIITFYSGV). One copy of the PPR7 repeat lies at 444-473 (EPFFNVMLTRASIWHERSIIDFIDKNYTLY). The PPR8 repeat unit spans residues 481 to 514 (SYRILLKSLGSIDNTNNEEILDRWLELVKKLNEL).

It belongs to the RMD9 family. Monomer. Post-translationally, phosphorylated. Phosphorylation promotes binding to RNA.

It localises to the mitochondrion inner membrane. Binds the RNA motif 5'-AAUAA[U/C]AUUCUU-3' in the 3'-UTR of mitochondrial mRNAs. Involved in the processing or stability of mitochondrial mRNAs. The polypeptide is RNA-binding protein RMD9, mitochondrial (Saccharomyces cerevisiae (strain ATCC 204508 / S288c) (Baker's yeast)).